Reading from the N-terminus, the 495-residue chain is Lysine--tRNA ligase (495 aa).

Mg(2+)-binding residues include Glu-406 and Glu-413.

The protein belongs to the class-II aminoacyl-tRNA synthetase family. As to quaternary structure, homodimer. The cofactor is Mg(2+).

It localises to the cytoplasm. The enzyme catalyses tRNA(Lys) + L-lysine + ATP = L-lysyl-tRNA(Lys) + AMP + diphosphate. The chain is Lysine--tRNA ligase from Staphylococcus aureus (strain MW2).